The sequence spans 73 residues: U3-agatoxin-Ao1i (73 aa).

An N-terminal signal peptide occupies residues 1-20; sequence MRTIISLLLLSAMVFAEIEA. Residues 21-34 constitute a propeptide that is removed on maturation; it reads ISLEEGLQLFEGER. Intrachain disulfides connect Cys36–Cys52, Cys43–Cys57, Cys51–Cys67, and Cys59–Cys65. The residue at position 71 (Ser71) is a Serine amide.

This sequence belongs to the neurotoxin 07 (Beta/delta-agtx) family. 03 (aga-4) subfamily. Aga sub-subfamily. Expressed by the venom gland.

It is found in the secreted. Insecticidal neurotoxin that induces an irreversible spastic paralysis when injected into insects. Modifies presynaptic voltage-gated sodium channels (Nav), causing them to open at the normal resting potential of the nerve. This leads to spontaneous release of neurotransmitter and repetitive action potentials in motor neurons. This Agelena orientalis (Funnel-web spider) protein is U3-agatoxin-Ao1i.